Consider the following 229-residue polypeptide: Serine acetyltransferase (229 aa).

The protein belongs to the transferase hexapeptide repeat family.

It is found in the cytoplasm. It carries out the reaction L-serine + acetyl-CoA = O-acetyl-L-serine + CoA. The protein operates within amino-acid biosynthesis; L-cysteine biosynthesis; L-cysteine from L-serine: step 1/2. Its function is as follows. Catalyzes the acetylation of serine by acetyl-CoA to produce O-acetylserine (OAS). This Mycobacterium tuberculosis (strain ATCC 25618 / H37Rv) protein is Serine acetyltransferase (cysE).